Consider the following 277-residue polypeptide: Caspase-3 (277 aa).

An N-acetylmethionine modification is found at Met1. 2 propeptides span residues 1 to 9 (MENNKTSVD) and 10 to 28 (SKSI…KSMD). An N6-acetyllysine modification is found at Lys11. Position 26 is a phosphoserine (Ser26). Residues His121 and Cys163 contribute to the active site. Cys163 is modified (S-nitrosocysteine; in inhibited form).

The protein belongs to the peptidase C14A family. Heterotetramer that consists of two anti-parallel arranged heterodimers, each one formed by a 17 kDa (p17) and a 12 kDa (p12) subunit. Interacts with BIRC6/bruce. In terms of assembly, (Microbial infection) Subunit p17 interacts with African swine fever virus (ASFV) inhibitor of apoptosis protein. Post-translationally, cleavage by granzyme B, caspase-6, caspase-8 and caspase-10 generates the two active subunits. Additional processing of the propeptides is likely due to the autocatalytic activity of the activated protease. Active heterodimers between the small subunit of caspase-7 protease and the large subunit of caspase-3 also occur and vice versa. In terms of processing, S-nitrosylated on its catalytic site cysteine in unstimulated cell lines and denitrosylated upon activation of the Fas apoptotic pathway, associated with an increase in intracellular caspase activity. Fas therefore activates caspase-3 not only by inducing the cleavage of the caspase zymogen to its active subunits, but also by stimulating the denitrosylation of its active site thiol. Ubiquitinated by BIRC6; this activity is inhibited by DIABLO/SMAC.

Its subcellular location is the cytoplasm. It catalyses the reaction Strict requirement for an Asp residue at positions P1 and P4. It has a preferred cleavage sequence of Asp-Xaa-Xaa-Asp-|- with a hydrophobic amino-acid residue at P2 and a hydrophilic amino-acid residue at P3, although Val or Ala are also accepted at this position.. Its activity is regulated as follows. Inhibited by BIRC6; following inhibition of BIRC6-caspase binding by DIABLO/SMAC, BIRC6 is subjected to caspase cleavage, leading to an increase in active caspases. Involved in the activation cascade of caspases responsible for apoptosis execution. At the onset of apoptosis, it proteolytically cleaves poly(ADP-ribose) polymerase PARP1 at a '216-Asp-|-Gly-217' bond. Cleaves and activates sterol regulatory element binding proteins (SREBPs) between the basic helix-loop-helix leucine zipper domain and the membrane attachment domain. Cleaves and activates caspase-6, -7 and -9 (CASP6, CASP7 and CASP9, respectively). Cleaves and inactivates interleukin-18 (IL18). Triggers cell adhesion in sympathetic neurons through RET cleavage. Cleaves IL-1 beta between an Asp and an Ala, releasing the mature cytokine which is involved in a variety of inflammatory processes. Cleaves and inhibits serine/threonine-protein kinase AKT1 in response to oxidative stress. Acts as an inhibitor of type I interferon production during virus-induced apoptosis by mediating cleavage of antiviral proteins CGAS, IRF3 and MAVS, thereby preventing cytokine overproduction. Also involved in pyroptosis by mediating cleavage and activation of gasdermin-E (GSDME). Cleaves XRCC4 and phospholipid scramblase proteins XKR4, XKR8 and XKR9, leading to promote phosphatidylserine exposure on apoptotic cell surface. Cleaves BIRC6 following inhibition of BIRC6-caspase binding by DIABLO/SMAC. This Sus scrofa (Pig) protein is Caspase-3 (CASP3).